Reading from the N-terminus, the 447-residue chain is Adenylosuccinate synthetase (447 aa).

Residues glycine 12–lysine 18 and glycine 40–threonine 42 each bind GTP. The active-site Proton acceptor is aspartate 13. Mg(2+)-binding residues include aspartate 13 and glycine 40. Residues aspartate 13–lysine 16, asparagine 38–histidine 41, threonine 128, arginine 142, glutamine 223, threonine 238, and arginine 302 each bind IMP. Histidine 41 serves as the catalytic Proton donor. Threonine 298–arginine 304 serves as a coordination point for substrate. Residues arginine 304, lysine 330–aspartate 332, and serine 412–glycine 414 each bind GTP.

It belongs to the adenylosuccinate synthetase family. Homodimer. Mg(2+) serves as cofactor.

The protein localises to the cytoplasm. The enzyme catalyses IMP + L-aspartate + GTP = N(6)-(1,2-dicarboxyethyl)-AMP + GDP + phosphate + 2 H(+). The protein operates within purine metabolism; AMP biosynthesis via de novo pathway; AMP from IMP: step 1/2. Plays an important role in the de novo pathway of purine nucleotide biosynthesis. Catalyzes the first committed step in the biosynthesis of AMP from IMP. This is Adenylosuccinate synthetase from Trichormus variabilis (strain ATCC 29413 / PCC 7937) (Anabaena variabilis).